A 241-amino-acid chain; its full sequence is 3-dehydroquinate dehydratase (241 aa).

Residues 35 to 37 (ELR) and Arg70 contribute to the 3-dehydroquinate site. The Proton donor/acceptor role is filled by His133. Catalysis depends on Lys160, which acts as the Schiff-base intermediate with substrate. 3-dehydroquinate-binding residues include Arg202 and Gln225.

The protein belongs to the type-I 3-dehydroquinase family. As to quaternary structure, homodimer.

The enzyme catalyses 3-dehydroquinate = 3-dehydroshikimate + H2O. It participates in metabolic intermediate biosynthesis; chorismate biosynthesis; chorismate from D-erythrose 4-phosphate and phosphoenolpyruvate: step 3/7. Functionally, involved in the third step of the chorismate pathway, which leads to the biosynthesis of aromatic amino acids. Catalyzes the cis-dehydration of 3-dehydroquinate (DHQ) and introduces the first double bond of the aromatic ring to yield 3-dehydroshikimate. This chain is 3-dehydroquinate dehydratase, found in Staphylococcus haemolyticus (strain JCSC1435).